The chain runs to 813 residues: Calpain-7 (813 aa).

Residue methionine 1 is modified to N-acetylmethionine. At threonine 95 the chain carries Phosphothreonine. In terms of domain architecture, Calpain catalytic spans 232–540 (RERFAYPMPF…YDVIYLSWNP (309 aa)). Residues cysteine 290, histidine 458, and asparagine 478 contribute to the active site. The domain III stretch occupies residues 541-701 (GLLKESTCIH…INGKWSGQSA (161 aa)). The segment at 702 to 813 (GGCGNFQETH…VIPIKTTQLQ (112 aa)) is domain N.

It belongs to the peptidase C2 family.

The protein resides in the nucleus. Its function is as follows. Calcium-regulated non-lysosomal thiol-protease. This chain is Calpain-7 (CAPN7), found in Sus scrofa (Pig).